Consider the following 379-residue polypeptide: 3-dehydroquinate synthase (379 aa).

Residues 113 to 117 (GVIGD), 137 to 138 (TS), lysine 150, and lysine 159 contribute to the NAD(+) site. Zn(2+) is bound by residues glutamate 192, histidine 256, and histidine 274.

It belongs to the sugar phosphate cyclases superfamily. Dehydroquinate synthase family. Co(2+) is required as a cofactor. Zn(2+) serves as cofactor. Requires NAD(+) as cofactor.

The protein localises to the cytoplasm. The enzyme catalyses 7-phospho-2-dehydro-3-deoxy-D-arabino-heptonate = 3-dehydroquinate + phosphate. Its pathway is metabolic intermediate biosynthesis; chorismate biosynthesis; chorismate from D-erythrose 4-phosphate and phosphoenolpyruvate: step 2/7. Functionally, catalyzes the conversion of 3-deoxy-D-arabino-heptulosonate 7-phosphate (DAHP) to dehydroquinate (DHQ). In Zymomonas mobilis subsp. mobilis (strain ATCC 31821 / ZM4 / CP4), this protein is 3-dehydroquinate synthase.